The primary structure comprises 116 residues: Peptidyl-tRNA hydrolase (116 aa).

It belongs to the PTH2 family.

The protein localises to the cytoplasm. The catalysed reaction is an N-acyl-L-alpha-aminoacyl-tRNA + H2O = an N-acyl-L-amino acid + a tRNA + H(+). Functionally, the natural substrate for this enzyme may be peptidyl-tRNAs which drop off the ribosome during protein synthesis. This is Peptidyl-tRNA hydrolase from Methanococcus vannielii (strain ATCC 35089 / DSM 1224 / JCM 13029 / OCM 148 / SB).